The primary structure comprises 157 residues: Ribosomal RNA large subunit methyltransferase H (157 aa).

Residues Leu-73, Gly-105, and 124–129 contribute to the S-adenosyl-L-methionine site; that span reads LSKMTF.

The protein belongs to the RNA methyltransferase RlmH family. As to quaternary structure, homodimer.

Its subcellular location is the cytoplasm. It catalyses the reaction pseudouridine(1915) in 23S rRNA + S-adenosyl-L-methionine = N(3)-methylpseudouridine(1915) in 23S rRNA + S-adenosyl-L-homocysteine + H(+). In terms of biological role, specifically methylates the pseudouridine at position 1915 (m3Psi1915) in 23S rRNA. This is Ribosomal RNA large subunit methyltransferase H from Parabacteroides distasonis (strain ATCC 8503 / DSM 20701 / CIP 104284 / JCM 5825 / NCTC 11152).